Here is a 368-residue protein sequence, read N- to C-terminus: MTTLNSTPRADGFHMPAEWAPQTQVWMVWPERPDNWRLGGKPAQAAHVAIAKAIARFEPVTVAVSAAQYDNARARLDMPNIRVVEMSSNDAWVRDSGPTFVINDRGELRGVNWEFNAWGGFDGGLYAPWNLDSQVGSKVLEIERCPRYATQGFVLEGGSIHVDGEGTLITTEECLLNRNRNPHLTREQIEAVLSDYLAVDKIIWLPDGLFNDETDGHVDNFCCYIRPGEVLLAWTDDPEDPNYPRCHAALSILENTRDAQGRAFIVHKMPIPGPLFATEEECAGVDQVHGSQERNPSVRLAGSYVNFLIVNGGIIAPSFDDPMDEKAREILQKLFPEHEVVMAPGRELLLGGGNIHCLTQQQPAPFKA.

Cysteine 357 serves as the catalytic Amidino-cysteine intermediate.

Belongs to the agmatine deiminase family. As to quaternary structure, homodimer.

It catalyses the reaction agmatine + H2O = N-carbamoylputrescine + NH4(+). It functions in the pathway amine and polyamine biosynthesis; putrescine biosynthesis via agmatine pathway; N-carbamoylputrescine from agmatine: step 1/1. In terms of biological role, mediates the hydrolysis of agmatine into N-carbamoylputrescine in the arginine decarboxylase (ADC) pathway of putrescine biosynthesis, a basic polyamine. The protein is Agmatine deiminase of Pseudomonas syringae pv. tomato (strain ATCC BAA-871 / DC3000).